A 427-amino-acid chain; its full sequence is MGKTTAEKIFASHLVDEPFSGTKVLRLDVVMCHEITTPIAIADLMARGKDRVFDPTKIKAVIDHVTPSKDSKTATQAKMLRDWARRHAIKDFFDVGHNGVCHALFPEKGYIRPGYTVIMGDSHTCTHGAFGAFAAGVGTTDLEVGILKGVCAFREPKSIRINLNGTLPKGVYAKDVILYVIGQLGVNGATDRVMEFRGPVVDAMTMESRMTLCNMAIEAGGTSGICMPDMVTVEYLWPFIENEYPSKEAALAEFSTWRSDDDAVYERVLDFDVSVLEPIVTFGYKPDQVKPISEIAGSPVDQVYLGSCTNGRLEDLRIAARILKGKKIAPSVRGILSPATPKIYKDAMAEGLIDIFMEAGFCVTNPTCGACLGMSNGVLAEGEVCASTTNRNFMGRMGKGGMVHLMSPATSAATAIEGVIADPRKYL.

[4Fe-4S] cluster contacts are provided by C308, C368, and C371.

It belongs to the aconitase/IPM isomerase family. LeuC type 2 subfamily. Heterodimer of LeuC and LeuD. It depends on [4Fe-4S] cluster as a cofactor.

The catalysed reaction is (2R,3S)-3-isopropylmalate = (2S)-2-isopropylmalate. It functions in the pathway amino-acid biosynthesis; L-leucine biosynthesis; L-leucine from 3-methyl-2-oxobutanoate: step 2/4. In terms of biological role, catalyzes the isomerization between 2-isopropylmalate and 3-isopropylmalate, via the formation of 2-isopropylmaleate. This chain is 3-isopropylmalate dehydratase large subunit, found in Geobacter metallireducens (strain ATCC 53774 / DSM 7210 / GS-15).